Here is a 715-residue protein sequence, read N- to C-terminus: Phosphatidylinositol 4-phosphate 5-kinase 6 (715 aa).

The span at 1 to 13 (MSVAHADDADDYS) shows a compositional bias: basic and acidic residues. The interval 1 to 21 (MSVAHADDADDYSRPTGESYH) is disordered. MORN repeat units follow at residues 32-54 (YTGQWRDNLPHGHGKYLWTDGCM), 55-77 (YVGDWHRGKTMGKGRFSWPSGAT), 78-100 (YEGDFKNGYMDGKGTYIDSSGDL), 101-123 (YRGSWVMNLRHGQGTKSYVNGDC), 124-146 (YDGEWRRGLQDGHGRYQWKNENH), 147-169 (YIGQWKNGLMNGNGTMIWSNGNR), 170-192 (YDGSWEDGAPKGNGTFRWSDGSF), and 193-214 (YVGVWSKDPKEQNGTYYPSTSS). The segment at 253 to 306 (GASEQSSSGNRTKNSERPRRRSVDGRVSNGEMELRSNGSGYLQVDDNAESTRSS) is disordered. Over residues 255 to 264 (SEQSSSGNRT) the composition is skewed to polar residues. The span at 265 to 276 (KNSERPRRRSVD) shows a compositional bias: basic and acidic residues. One can recognise a PIPK domain in the interval 321–711 (TISKGHKNYE…RFRDFIFRVF (391 aa)). Positions 671–692 (YDISKKLEHAYKSMQYDPTSIS) are activation loop.

The catalysed reaction is a 1,2-diacyl-sn-glycero-3-phospho-(1D-myo-inositol 4-phosphate) + ATP = a 1,2-diacyl-sn-glycero-3-phospho-(1D-myo-inositol-4,5-bisphosphate) + ADP + H(+). This is Phosphatidylinositol 4-phosphate 5-kinase 6 (PIP5K6) from Arabidopsis thaliana (Mouse-ear cress).